A 320-amino-acid polypeptide reads, in one-letter code: Atrochrysone carboxyl ACP thioesterase (320 aa).

Residues H103, H105, D107, and H108 each coordinate Zn(2+). D107 acts as the Proton donor/acceptor in catalysis.

This sequence belongs to the metallo-beta-lactamase superfamily. The cofactor is Zn(2+).

The enzyme catalyses atrochrysone carboxyl-[ACP] + H2O = atrochrysone carboxylate + holo-[ACP] + H(+). Its pathway is secondary metabolite biosynthesis. In terms of biological role, atrochrysone carboxyl ACP thioesterase; part of the gene cluster that mediates the biosynthesis of geodin, an intermediate in the biosynthesis of other natural products. The pathway begins with the synthesis of atrochrysone thioester by the polyketide synthase (PKS) gedC. The atrochrysone carboxyl ACP thioesterase gedB then breaks the thioester bond and releases the atrochrysone carboxylic acid from gedC. The atrochrysone carboxylic acid is then converted to atrochrysone which is further transformed into emodinanthrone. The next step is performed by the emodinanthrone oxygenase gedH that catalyzes the oxidation of emodinanthrone to emodin. Emodin O-methyltransferase encoded probably by gedA then catalyzes methylation of the 8-hydroxy group of emodin to form questin. Ring cleavage of questin by questin oxidase gedK leads to desmethylsulochrin via several intermediates including questin epoxide. Another methylation step probably catalyzed by methyltransferase gedG leads to the formation of sulochrin which is further converted to dihydrogeodin by the sulochrin halogenase gedL. Finally, the dihydrogeodin oxidase gedJ catalyzes the stereospecific phenol oxidative coupling reaction converting dihydrogeodin to geodin. This Aspergillus terreus (strain NIH 2624 / FGSC A1156) protein is Atrochrysone carboxyl ACP thioesterase.